The chain runs to 714 residues: DNA ligase (714 aa).

Residues D59–D63, S108–L109, and E139 each bind NAD(+). The N6-AMP-lysine intermediate role is filled by K141. Residues R162, E200, K325, and K349 each coordinate NAD(+). 4 residues coordinate Zn(2+): C443, C446, C461, and C466. The 90-residue stretch at V624 to H713 folds into the BRCT domain.

It belongs to the NAD-dependent DNA ligase family. LigA subfamily. Mg(2+) is required as a cofactor. Mn(2+) serves as cofactor.

The enzyme catalyses NAD(+) + (deoxyribonucleotide)n-3'-hydroxyl + 5'-phospho-(deoxyribonucleotide)m = (deoxyribonucleotide)n+m + AMP + beta-nicotinamide D-nucleotide.. In terms of biological role, DNA ligase that catalyzes the formation of phosphodiester linkages between 5'-phosphoryl and 3'-hydroxyl groups in double-stranded DNA using NAD as a coenzyme and as the energy source for the reaction. It is essential for DNA replication and repair of damaged DNA. In Persephonella marina (strain DSM 14350 / EX-H1), this protein is DNA ligase.